The sequence spans 239 residues: Tetraspanin-9 (239 aa).

Residues 1–13 are Cytoplasmic-facing; the sequence is MARGCLCCLKYMM. Residues 14–34 form a helical membrane-spanning segment; it reads FLFNLIFWLCGCGLLGVGIWL. The Extracellular portion of the chain corresponds to 35-55; it reads SVSQGNFATFSPSFPSLSAAN. Residues 56–76 form a helical membrane-spanning segment; the sequence is LVIVIGTVVMVTGFLGCLGAI. The Cytoplasmic portion of the chain corresponds to 77-85; the sequence is KENKCLLLS. The chain crosses the membrane as a helical span at residues 86–106; sequence FFIILLIILLTELILLILFFV. Topologically, residues 107 to 203 are extracellular; the sequence is YMDKVNENAK…VKMWFDDNKH (97 aa). N180 carries an N-linked (GlcNAc...) asparagine glycan. A helical transmembrane segment spans residues 204–224; sequence VLGTIGMCILIIQILGMAFSM. The Cytoplasmic segment spans residues 225 to 239; it reads TLFQQIHRTGKKYDA.

This sequence belongs to the tetraspanin (TM4SF) family.

Its subcellular location is the membrane. The chain is Tetraspanin-9 (tspan9) from Xenopus laevis (African clawed frog).